A 502-amino-acid chain; its full sequence is Protein Dok-7 (502 aa).

Residues 4–109 (SVVVEGYARL…WDARLRYSLG (106 aa)) form the PH domain. One can recognise an IRS-type PTB domain in the interval 105 to 210 (RYSLGEVHRF…RGISPTRGPF (106 aa)). 4 disordered regions span residues 210-232 (FGLRPVLPDPSTSETSSEERLNH), 249-279 (STASYCPSAGGDDRSISGSSDTSDTSHSDCS), 291-358 (TSIQ…GSFS), and 418-482 (EVGG…GHPG). Low complexity-rich tracts occupy residues 264-279 (ISGSSDTSDTSHSDCS) and 301-316 (AGAKAAAQSAEKPLPS). Positions 336-346 (GRQSSSDSGIA) are enriched in polar residues. Residues 347-358 (TGSHSSYSGSFS) are compositionally biased toward low complexity. The segment covering 459-473 (PNEHFRSPSESKKSS) has biased composition (basic and acidic residues).

The protein resides in the cell membrane. It is found in the synapse. Functionally, probable muscle-intrinsic activator of MUSK that plays an essential role in neuromuscular synaptogenesis. Acts in aneural activation of MUSK and subsequent acetylcholine receptor (AchR) clustering in myotubes. This chain is Protein Dok-7 (dok7), found in Takifugu rubripes (Japanese pufferfish).